The following is a 56-amino-acid chain: MAVQKSKVTRSRRGQRRSHDALTAAATTVDVTSGETHLRHNVTADGYYKGVKVINK.

The tract at residues 1–26 (MAVQKSKVTRSRRGQRRSHDALTAAA) is disordered. Over residues 7 to 16 (KVTRSRRGQR) the composition is skewed to basic residues.

Belongs to the bacterial ribosomal protein bL32 family.

The chain is Large ribosomal subunit protein bL32 (rpmF) from Moritella marina (Vibrio marinus).